The following is a 78-amino-acid chain: Conotoxin Bu2 (78 aa).

The signal sequence occupies residues 1-19; sequence MKLTCVLIIAVLFLTAITA. The propeptide occupies 20-41; sequence DDSRDKQVYRAVGLIDKMRRIR. Disulfide bonds link Cys-46-Cys-59, Cys-53-Cys-64, and Cys-58-Cys-73.

It belongs to the conotoxin O1 superfamily. In terms of tissue distribution, expressed by the venom duct.

It localises to the secreted. The polypeptide is Conotoxin Bu2 (Conus bullatus (Bubble cone)).